Here is a 953-residue protein sequence, read N- to C-terminus: Homeobox protein LUMINIDEPENDENS (953 aa).

Residues Lys-63–Gln-123 constitute a DNA-binding region (homeobox). The tract at residues Glu-404–Ser-430 is disordered. Polar residues predominate over residues Ser-414–Arg-425. 5 tandem repeats follow at residues Gln-498–Gly-502, Gln-507–Gly-511, Gln-516–Gly-520, Gln-525–Gly-529, and Gln-534–Gly-538. Residues Gln-498–Gly-538 are 5 X 5 AA repeats of Q-P-V-N-G. Disordered regions lie at residues Asn-606–Asp-668, Ala-733–Met-763, and Val-861–Arg-953. Residues Lys-608 to Thr-623 show a composition bias toward basic and acidic residues. Positions Pro-651–Glu-661 are enriched in low complexity. Polar residues predominate over residues Ala-733–Lys-742. Residues Ser-869–His-884 are compositionally biased toward low complexity. Polar residues-rich tracts occupy residues Glu-888–Ala-934 and Thr-942–Arg-953.

Interacts with SUF4. Expressed in shoot apex, root apex, leaf primordia and floral buds.

It is found in the nucleus. Its function is as follows. Seems to play a role in the regulation of flowering time in the autonomous flowering pathway by repressing FLOWERING LOCUS C expression. The sequence is that of Homeobox protein LUMINIDEPENDENS (LD) from Arabidopsis thaliana (Mouse-ear cress).